The following is a 190-amino-acid chain: R46 site-specific recombinase (190 aa).

Residues 2–137 (RLFGYARVST…EGRQEAKLKG (136 aa)) form the Resolvase/invertase-type recombinase catalytic domain. Ser-10 acts as the O-(5'-phospho-DNA)-serine intermediate in catalysis. A DNA-binding region (H-T-H motif) is located at residues 161 to 180 (ATDIARRLSIARSTVYKILE).

The protein belongs to the site-specific recombinase resolvase family.

In terms of biological role, site-specific recombination protein. The chain is R46 site-specific recombinase (tnpR) from Escherichia coli.